A 97-amino-acid polypeptide reads, in one-letter code: Aspartyl/glutamyl-tRNA(Asn/Gln) amidotransferase subunit C (97 aa).

It belongs to the GatC family. As to quaternary structure, heterotrimer of A, B and C subunits.

The catalysed reaction is L-glutamyl-tRNA(Gln) + L-glutamine + ATP + H2O = L-glutaminyl-tRNA(Gln) + L-glutamate + ADP + phosphate + H(+). It carries out the reaction L-aspartyl-tRNA(Asn) + L-glutamine + ATP + H2O = L-asparaginyl-tRNA(Asn) + L-glutamate + ADP + phosphate + 2 H(+). Functionally, allows the formation of correctly charged Asn-tRNA(Asn) or Gln-tRNA(Gln) through the transamidation of misacylated Asp-tRNA(Asn) or Glu-tRNA(Gln) in organisms which lack either or both of asparaginyl-tRNA or glutaminyl-tRNA synthetases. The reaction takes place in the presence of glutamine and ATP through an activated phospho-Asp-tRNA(Asn) or phospho-Glu-tRNA(Gln). This chain is Aspartyl/glutamyl-tRNA(Asn/Gln) amidotransferase subunit C, found in Prochlorococcus marinus (strain MIT 9301).